The primary structure comprises 350 residues: Tetraacyldisaccharide 4'-kinase (350 aa).

Serine 48–threonine 55 lines the ATP pocket.

This sequence belongs to the LpxK family.

The enzyme catalyses a lipid A disaccharide + ATP = a lipid IVA + ADP + H(+). It participates in glycolipid biosynthesis; lipid IV(A) biosynthesis; lipid IV(A) from (3R)-3-hydroxytetradecanoyl-[acyl-carrier-protein] and UDP-N-acetyl-alpha-D-glucosamine: step 6/6. Functionally, transfers the gamma-phosphate of ATP to the 4'-position of a tetraacyldisaccharide 1-phosphate intermediate (termed DS-1-P) to form tetraacyldisaccharide 1,4'-bis-phosphate (lipid IVA). The sequence is that of Tetraacyldisaccharide 4'-kinase from Chlorobium limicola (strain DSM 245 / NBRC 103803 / 6330).